The chain runs to 175 residues: FMN reductase (NADH) RutF (175 aa).

The protein belongs to the non-flavoprotein flavin reductase family. RutF subfamily.

It carries out the reaction FMNH2 + NAD(+) = FMN + NADH + 2 H(+). In terms of biological role, catalyzes the reduction of FMN to FMNH2 which is used to reduce pyrimidine by RutA via the Rut pathway. In Serratia proteamaculans (strain 568), this protein is FMN reductase (NADH) RutF.